The sequence spans 415 residues: Serine hydroxymethyltransferase (415 aa).

(6S)-5,6,7,8-tetrahydrofolate is bound by residues Leu122 and 126-128 (GHL). Position 230 is an N6-(pyridoxal phosphate)lysine (Lys230).

Belongs to the SHMT family. In terms of assembly, homodimer. Pyridoxal 5'-phosphate serves as cofactor.

The protein localises to the cytoplasm. The catalysed reaction is (6R)-5,10-methylene-5,6,7,8-tetrahydrofolate + glycine + H2O = (6S)-5,6,7,8-tetrahydrofolate + L-serine. It participates in one-carbon metabolism; tetrahydrofolate interconversion. Its pathway is amino-acid biosynthesis; glycine biosynthesis; glycine from L-serine: step 1/1. In terms of biological role, catalyzes the reversible interconversion of serine and glycine with tetrahydrofolate (THF) serving as the one-carbon carrier. This reaction serves as the major source of one-carbon groups required for the biosynthesis of purines, thymidylate, methionine, and other important biomolecules. Also exhibits THF-independent aldolase activity toward beta-hydroxyamino acids, producing glycine and aldehydes, via a retro-aldol mechanism. The sequence is that of Serine hydroxymethyltransferase from Cupriavidus taiwanensis (strain DSM 17343 / BCRC 17206 / CCUG 44338 / CIP 107171 / LMG 19424 / R1) (Ralstonia taiwanensis (strain LMG 19424)).